The chain runs to 305 residues: Insulin-like growth factor-binding protein 2 (305 aa).

The signal sequence occupies residues 1 to 34 (MLPRLGGPALPLLLPSLLLLLLLGAGGCGPGVRA). The region spanning 36–118 (VLFRCPPCTP…VTGAGTCEKR (83 aa)) is the IGFBP N-terminal domain. Cystine bridges form between cysteine 40–cysteine 68, cysteine 43–cysteine 70, cysteine 51–cysteine 71, cysteine 59–cysteine 74, cysteine 82–cysteine 95, cysteine 89–cysteine 115, cysteine 207–cysteine 241, cysteine 252–cysteine 263, and cysteine 265–cysteine 286. The region spanning 204-286 (RTPCQQELDQ…APTIRGDPEC (83 aa)) is the Thyroglobulin type-1 domain. Residues 281 to 283 (RGD) carry the Cell attachment site motif.

As to quaternary structure, interacts with IGF1. Interacts with IGF2. Interacts (via RGD motif) with integrin alpha5/ITGA5; this interaction induces cell migration, adhesion or apoptosis according to the context. Interacts with PTPRB; this interaction leads to PTPRB dimerization and inactivation. Cleaved by MMP9 leading to release of free IGF2 from IGFBP2-IGF2 complex, which contributes to enhance the motility and the growth of astrocytes. Post-translationally, O-glycosylated. Highly expressed in adult liver, but also in kidney, lung, brain, spleen, testis and ovary.

It localises to the secreted. Functionally, multifunctional protein that plays a critical role in regulating the availability of IGFs such as IGF1 and IGF2 to their receptors and thereby regulates IGF-mediated cellular processes including proliferation, differentiation, and apoptosis in a cell-type specific manner. Functions coordinately with receptor protein tyrosine phosphatase beta/PTPRB and the IGF1 receptor to regulate IGF1-mediated signaling by stimulating the phosphorylation of PTEN leading to its inactivation and AKT1 activation. Plays a positive role in cell migration via interaction with integrin alpha5/ITGA5 through an RGD motif. Additionally, interaction with ITGA5/ITGB1 enhances the adhesion of endothelial progenitor cells to endothelial cells. Upon mitochondrial damage, facilitates apoptosis with ITGA5 of podocytes, and then activates the phosphorylation of focal adhesion kinase (FAK)-mediated mitochondrial injury. The polypeptide is Insulin-like growth factor-binding protein 2 (Igfbp2) (Mus musculus (Mouse)).